The primary structure comprises 137 residues: Peptide methionine sulfoxide reductase MsrB (137 aa).

The region spanning 7-129 is the MsrB domain; it reads AEELKKNLSD…NSASLRFTDG (123 aa). Zn(2+) contacts are provided by cysteine 46, cysteine 49, cysteine 95, and cysteine 98. The active-site Nucleophile is the cysteine 118.

The protein belongs to the MsrB Met sulfoxide reductase family. The cofactor is Zn(2+).

It carries out the reaction L-methionyl-[protein] + [thioredoxin]-disulfide + H2O = L-methionyl-(R)-S-oxide-[protein] + [thioredoxin]-dithiol. The protein is Peptide methionine sulfoxide reductase MsrB of Shigella dysenteriae serotype 1 (strain Sd197).